The chain runs to 222 residues: UPF0758 protein YicR (222 aa).

In terms of domain architecture, MPN spans Pro-100–Ile-222. Residues His-171, His-173, and Asp-184 each coordinate Zn(2+). The JAMM motif motif lies at His-171–Asp-184.

The protein belongs to the UPF0758 family. YicR subfamily.

This Escherichia coli O81 (strain ED1a) protein is UPF0758 protein YicR.